A 155-amino-acid chain; its full sequence is Fibroblast growth factor 1 (155 aa).

A propeptide spanning residues 1–15 (MAEGEITTFTALTER) is cleaved from the precursor. Residue N33 participates in heparin binding. The segment at 127–143 (KKNGNSKLGPRTHYGQK) is heparin-binding.

Belongs to the heparin-binding growth factors family.

It localises to the secreted. The protein resides in the cytoplasm. The protein localises to the cell cortex. Its subcellular location is the cytosol. It is found in the nucleus. Functionally, plays an important role in the regulation of cell survival, cell division, angiogenesis, cell differentiation and cell migration. Functions as a potent mitogen in vitro. Acts as a ligand for FGFR1 and integrins. Binds to FGFR1 in the presence of heparin leading to FGFR1 dimerization and activation via sequential autophosphorylation on tyrosine residues which act as docking sites for interacting proteins, leading to the activation of several signaling cascades. Binds to integrins. Its binding to integrins and subsequent ternary complex formation with integrins and FGFR1 are essential for FGF1 signaling. The protein is Fibroblast growth factor 1 (FGF1) of Gallus gallus (Chicken).